The primary structure comprises 452 residues: Ribosomal protein uS12 methylthiotransferase RimO (452 aa).

Residues 3-122 (LTVGLISLGC…LPEIITQVMD (120 aa)) enclose the MTTase N-terminal domain. The [4Fe-4S] cluster site is built by cysteine 12, cysteine 48, cysteine 85, cysteine 162, cysteine 166, and cysteine 169. One can recognise a Radical SAM core domain in the interval 148–392 (LTPPHTAYIK…TLLLARLASE (245 aa)). The TRAM domain occupies 395–452 (QEQIGRQIRVLVDAPGVARTEWDAPDIDGTVSVPLTLPVGQFATVTVTDAVAYELTAE).

This sequence belongs to the methylthiotransferase family. RimO subfamily. The cofactor is [4Fe-4S] cluster.

Its subcellular location is the cytoplasm. It catalyses the reaction L-aspartate(89)-[ribosomal protein uS12]-hydrogen + (sulfur carrier)-SH + AH2 + 2 S-adenosyl-L-methionine = 3-methylsulfanyl-L-aspartate(89)-[ribosomal protein uS12]-hydrogen + (sulfur carrier)-H + 5'-deoxyadenosine + L-methionine + A + S-adenosyl-L-homocysteine + 2 H(+). In terms of biological role, catalyzes the methylthiolation of an aspartic acid residue of ribosomal protein uS12. The polypeptide is Ribosomal protein uS12 methylthiotransferase RimO (Akkermansia muciniphila (strain ATCC BAA-835 / DSM 22959 / JCM 33894 / BCRC 81048 / CCUG 64013 / CIP 107961 / Muc)).